A 440-amino-acid chain; its full sequence is MMADEEEEVKPILQKLQELVDQLYSFRDCYFETHSVEDAGRKQQDVQKEMEKTLQQMEEVVGSVQGKAQVLMLTGKALNVTPDYSPKAEELLSKAVKLEPELVEAWNQLGEVYWKKGDVAAAHTCFSGALTHCRNKVSLQNLSMVLRQLRTDTEDEHSHHVMDSVRQAKLAVQMDVHDGRSWYILGNSYLSLYFSTGQNPKISQQALSAYAQAEKVDRKASSNPDLHLNRATLHKYEESYGEALEGFSRAAALDPAWPEPRQREQQLLEFLDRLTSLLESKGKVKTKKLQSMLGSLRPAHLGPCSDGHYQSASGQKVTLELKPLSTLQPGVNSGAVILGKVVFSLTTEEKVPFTFGLVDSDGPCYAVMVYNIVQSWGVLIGDSVAIPEPNLRLHRIQHKGKDYSFSSVRVETPLLLVVNGKPQGSSSQAVATVASRPQCE.

TPR repeat units follow at residues 7–61 (EEVK…EEVV), 68–98 (AQVL…AVKL), 103–130 (VEAW…SGAL), 136–174 (KVSL…AVQM), and 179–216 (GRSW…AEKV). A Nuclear export signal motif is present at residues 13-24 (LQKLQELVDQLY). Residue Ser203 is modified to Phosphoserine; by ATM. Ser221 bears the Phosphoserine; by CHEK2 mark. The stretch at 224 to 253 (PDLHLNRATLHKYEESYGEALEGFSRAAAL) is one TPR 6 repeat. Residues 285–287 (KTK) are mediates interaction with 28S rRNA of ribosome-coding tubulin.

Interacts with JMY and p300/EP300; the interaction occurs in the nucleus and augments the association between JMY and p300/EP300 in response to DNA damage. Forms a complex with HSF1 and p300/EP300; these interactions augment chromatin-bound HSF1 and p300/EP300 histone acetyltransferase activity, resulting in enhanced heat-shock-responsive transcription. Interacts with PRMT5; the interaction is DNA damage-dependent and promotes PRMT5 interaction with p53/TP53 and subsequent methylation. Interacts with JMY; the interaction occurs in the cytoplasm and results in the inhibition of JYM's nucleation activity. Interacts with ribosome-coding tubulin (via 60S subunit 28S rRNA and protein uL24/RPL26) and the N-terminal of nascent tubulin polypeptide (via alpha-tubulin MREC motif and beta-tubulin MREI motif); these interactions result in tubulin mRNA-targeted degradation. Interacts with ATP5F1B; the interaction occurs in the mitochondria and results in ATP production decrease. Interacts with p53/TP53; the interaction occurs in the mitochondria and results in increased apoptosis. Phosphorylation by ATM kinase induces nuclear accumulation while interfering with nuclear export, and phosphorylation by CHEK2 kinase enhances nuclear stability.

Its subcellular location is the nucleus. It localises to the cytoplasm. It is found in the cytoplasmic vesicle. The protein resides in the mitochondrion matrix. In terms of biological role, cofactor involved in the regulation of various cellular mechanisms such as actin regulation, autophagy, chromatin regulation and DNA repair. In non-stress conditions, interacts with cofactor JMY in the cytoplasm which prevents JMY's actin nucleation activity and ability to activate the Arp2/3 complex. Acts as a negative regulator of nutrient stress-induced autophagy by preventing JMY's interaction with MAP1LC3B, thereby preventing autophagosome formation. Involves in tubulin autoregulation by promoting its degradation in response to excess soluble tubulin. To do so, associates with the active ribosome near the ribosome exit tunnel and with nascent tubulin polypeptides early during their translation, triggering tubulin mRNA-targeted degradation. Following DNA damage, phosphorylated by DNA damage responsive protein kinases ATM and CHEK2, leading to its nuclear accumulation and stability. Nuclear TTC5/STRAP promotes the assembly of a stress-responsive p53/TP53 coactivator complex, which includes the coactivators JMY and p300, thereby increasing p53/TP53-dependent transcription and apoptosis. Also recruits arginine methyltransferase PRMT5 to p53/TP53 when DNA is damaged, allowing PRMT5 to methylate p53/TP53. In DNA stress conditions, also prevents p53/TP53 degradation by E3 ubiquitin ligase MDM2. Upon heat-shock stress, forms a chromatin-associated complex with heat-shock factor 1 HSF1 and p300/EP300 to stimulate heat-shock-responsive transcription, thereby increasing cell survival. Mitochondrial TTC5/STRAP interacts with ATP synthase subunit beta ATP5F1B which decreased ATP synthase activity and lowers mitochondrial ATP production, thereby regulating cellular respiration and mitochondrial-dependent apoptosis. Mitochondrial TTC5/STRAP also regulates p53/TP53-mediated apoptosis. The protein is Tetratricopeptide repeat protein 5 of Homo sapiens (Human).